Consider the following 395-residue polypeptide: NAD(P)H-quinone oxidoreductase subunit H, chloroplastic (395 aa).

Belongs to the complex I 49 kDa subunit family. In terms of assembly, NDH is composed of at least 16 different subunits, 5 of which are encoded in the nucleus.

It localises to the plastid. The protein resides in the chloroplast thylakoid membrane. The catalysed reaction is a plastoquinone + NADH + (n+1) H(+)(in) = a plastoquinol + NAD(+) + n H(+)(out). The enzyme catalyses a plastoquinone + NADPH + (n+1) H(+)(in) = a plastoquinol + NADP(+) + n H(+)(out). Its function is as follows. NDH shuttles electrons from NAD(P)H:plastoquinone, via FMN and iron-sulfur (Fe-S) centers, to quinones in the photosynthetic chain and possibly in a chloroplast respiratory chain. The immediate electron acceptor for the enzyme in this species is believed to be plastoquinone. Couples the redox reaction to proton translocation, and thus conserves the redox energy in a proton gradient. The polypeptide is NAD(P)H-quinone oxidoreductase subunit H, chloroplastic (Citrus sinensis (Sweet orange)).